Reading from the N-terminus, the 312-residue chain is Serine/threonine-protein phosphatase PP1 isozyme 2 (312 aa).

At Ala-2 the chain carries N-acetylalanine. Residues Asp-70, His-72, Asp-98, and Asn-130 each contribute to the Mn(2+) site. Catalysis depends on His-131, which acts as the Proton donor. His-179 and His-254 together coordinate Mn(2+).

The protein belongs to the PPP phosphatase family. PP-1 subfamily. As to quaternary structure, interacts with SRK2D/SNRK2.2 and SRK2E/SNRK2.6. It depends on Mn(2+) as a cofactor.

The protein resides in the nucleus. It is found in the cytoplasm. The enzyme catalyses O-phospho-L-seryl-[protein] + H2O = L-seryl-[protein] + phosphate. The catalysed reaction is O-phospho-L-threonyl-[protein] + H2O = L-threonyl-[protein] + phosphate. With respect to regulation, phosphatase activity is strongly reduced by the protein phosphatase inhibitor 2 (I-2). In terms of biological role, serine/threonine-protein phosphatase that possesses phosphatase activity toward para-nitrophenyl phosphate (pNPP) in vitro. In Arabidopsis thaliana (Mouse-ear cress), this protein is Serine/threonine-protein phosphatase PP1 isozyme 2.